Here is a 455-residue protein sequence, read N- to C-terminus: D-arabinitol 4-dehydrogenase (455 aa).

This sequence belongs to the mannitol dehydrogenase family. In terms of assembly, monomer.

The enzyme catalyses D-arabinitol + NAD(+) = D-xylulose + NADH + H(+). It functions in the pathway carbohydrate metabolism; D-arabinitol metabolism. The sequence is that of D-arabinitol 4-dehydrogenase (dalD) from Klebsiella pneumoniae.